Here is a 76-residue protein sequence, read N- to C-terminus: Large ribosomal subunit protein uL24 (76 aa).

Belongs to the universal ribosomal protein uL24 family. Part of the 50S ribosomal subunit.

Functionally, one of two assembly initiator proteins, it binds directly to the 5'-end of the 23S rRNA, where it nucleates assembly of the 50S subunit. Its function is as follows. One of the proteins that surrounds the polypeptide exit tunnel on the outside of the subunit. The protein is Large ribosomal subunit protein uL24 of Campylobacter hominis (strain ATCC BAA-381 / DSM 21671 / CCUG 45161 / LMG 19568 / NCTC 13146 / CH001A).